The sequence spans 70 residues: Brevinin-ALb (70 aa).

The N-terminal stretch at 1-22 (MFTLKKSLLLLFFLGTINLSLC) is a signal peptide. A propeptide spanning residues 23–46 (EQERDADEEERRDDDEMDVEVEKR) is cleaved from the precursor. An intrachain disulfide couples cysteine 64 to cysteine 70.

Expressed by the skin glands.

The protein localises to the secreted. Functionally, antimicrobial peptide with activity against Gram-positive and Gram-negative bacteria and against fungi. Has been tested against S.aureus (MIC=5.5 ug/mL), E.coli (MIC=6.5 ug/mL), B.dysenteriae (MIC=2.2 ug/mL), and C.albicans (MIC=7.5 ug/mL). Can regulate or mediate antimicrobial response by stimulating mast cell degranulation. Induces histamine release. Shows cytotoxicity toward solid tumor cell line HepG2. Also shows a potent hemolytic activity (LD(50)=5 ug/ml). The polypeptide is Brevinin-ALb (Amolops loloensis (Lolokou Sucker Frog)).